The chain runs to 431 residues: Histidinol dehydrogenase (431 aa).

3 residues coordinate NAD(+): Y127, Q185, and N208. Substrate is bound by residues S234, Q256, and H259. Zn(2+) is bound by residues Q256 and H259. Active-site proton acceptor residues include E323 and H324. The substrate site is built by H324, D357, E411, and H416. D357 is a Zn(2+) binding site. H416 is a binding site for Zn(2+).

This sequence belongs to the histidinol dehydrogenase family. Zn(2+) serves as cofactor.

It carries out the reaction L-histidinol + 2 NAD(+) + H2O = L-histidine + 2 NADH + 3 H(+). The protein operates within amino-acid biosynthesis; L-histidine biosynthesis; L-histidine from 5-phospho-alpha-D-ribose 1-diphosphate: step 9/9. In terms of biological role, catalyzes the sequential NAD-dependent oxidations of L-histidinol to L-histidinaldehyde and then to L-histidine. This is Histidinol dehydrogenase from Vibrio cholerae serotype O1 (strain ATCC 39315 / El Tor Inaba N16961).